The sequence spans 153 residues: SsrA-binding protein (153 aa).

Residues 131-153 (EYDKRDSIRERDDRREMDRAFKR) form a disordered region.

This sequence belongs to the SmpB family.

It localises to the cytoplasm. Required for rescue of stalled ribosomes mediated by trans-translation. Binds to transfer-messenger RNA (tmRNA), required for stable association of tmRNA with ribosomes. tmRNA and SmpB together mimic tRNA shape, replacing the anticodon stem-loop with SmpB. tmRNA is encoded by the ssrA gene; the 2 termini fold to resemble tRNA(Ala) and it encodes a 'tag peptide', a short internal open reading frame. During trans-translation Ala-aminoacylated tmRNA acts like a tRNA, entering the A-site of stalled ribosomes, displacing the stalled mRNA. The ribosome then switches to translate the ORF on the tmRNA; the nascent peptide is terminated with the 'tag peptide' encoded by the tmRNA and targeted for degradation. The ribosome is freed to recommence translation, which seems to be the essential function of trans-translation. This chain is SsrA-binding protein, found in Parabacteroides distasonis (strain ATCC 8503 / DSM 20701 / CIP 104284 / JCM 5825 / NCTC 11152).